Consider the following 79-residue polypeptide: MSTIEERVKKIVVEQLGVKEEEVTTSASFVDDLGADSLDTVELVMALEEEFECEIPDEEAEKITSVQQAIDYVKAHVKS.

Residues 2–77 (STIEERVKKI…QAIDYVKAHV (76 aa)) form the Carrier domain. Position 37 is an O-(pantetheine 4'-phosphoryl)serine (Ser37).

This sequence belongs to the acyl carrier protein (ACP) family. In terms of processing, 4'-phosphopantetheine is transferred from CoA to a specific serine of apo-ACP by AcpS. This modification is essential for activity because fatty acids are bound in thioester linkage to the sulfhydryl of the prosthetic group.

It is found in the cytoplasm. The protein operates within lipid metabolism; fatty acid biosynthesis. Functionally, carrier of the growing fatty acid chain in fatty acid biosynthesis. The polypeptide is Acyl carrier protein (Xanthomonas axonopodis pv. citri (strain 306)).